A 376-amino-acid polypeptide reads, in one-letter code: Cysteine synthase 1 (376 aa).

The N-terminal 16 residues, 1–16 (MFRHGVRTFATTSLRR), are a transit peptide targeting the mitochondrion. Lys-79 carries the N6-(pyridoxal phosphate)lysine modification. Pyridoxal 5'-phosphate-binding positions include Asn-109, 215 to 219 (GTGGT), and Ser-314.

Belongs to the cysteine synthase/cystathionine beta-synthase family. The cofactor is pyridoxal 5'-phosphate.

Its subcellular location is the mitochondrion. The enzyme catalyses O-succinyl-L-serine + hydrogen sulfide = L-cysteine + succinate. It catalyses the reaction O-acetyl-L-serine + hydrogen sulfide = L-cysteine + acetate. Its pathway is amino-acid biosynthesis; L-cysteine biosynthesis; L-cysteine from L-serine: step 2/2. In terms of biological role, catalyzes the conversion of O-succinyl-L-serine into cysteine, the last step in the cysteine biosynthesis pathway. Can also use O-acetyl-L-serine. The polypeptide is Cysteine synthase 1 (cys-17) (Neurospora crassa (strain ATCC 24698 / 74-OR23-1A / CBS 708.71 / DSM 1257 / FGSC 987)).